The following is a 32-amino-acid chain: Photosystem II reaction center protein Z (32 aa).

The helical transmembrane segment at 9 to 29 (IIFSGSLIWVFLLIIVGFLNY) threads the bilayer.

It belongs to the PsbZ family. PSII is composed of 1 copy each of membrane proteins PsbA, PsbB, PsbC, PsbD, PsbE, PsbF, PsbH, PsbI, PsbJ, PsbK, PsbL, PsbM, PsbT, PsbY, PsbZ, Psb30/Ycf12, at least 3 peripheral proteins of the oxygen-evolving complex and a large number of cofactors. It forms dimeric complexes.

It is found in the plastid. Its subcellular location is the chloroplast thylakoid membrane. Functionally, may control the interaction of photosystem II (PSII) cores with the light-harvesting antenna, regulates electron flow through the 2 photosystem reaction centers. PSII is a light-driven water plastoquinone oxidoreductase, using light energy to abstract electrons from H(2)O, generating a proton gradient subsequently used for ATP formation. This chain is Photosystem II reaction center protein Z, found in Euglena myxocylindracea.